Here is an 852-residue protein sequence, read N- to C-terminus: Bifunctional uridylyltransferase/uridylyl-removing enzyme (852 aa).

The tract at residues 1-318 (MPANLSSALE…SAPMRVTLRI (318 aa)) is uridylyltransferase. The segment at 319 to 672 (DDDYIQVNNQ…SRILFKSDSF (354 aa)) is uridylyl-removing. Positions 436–558 (VDDHILTVVR…VQTHERLSAL (123 aa)) constitute an HD domain. ACT domains follow at residues 673-757 (QVMV…SHSR) and 785-852 (SVEI…EQLS).

This sequence belongs to the GlnD family. Requires Mg(2+) as cofactor.

It carries out the reaction [protein-PII]-L-tyrosine + UTP = [protein-PII]-uridylyl-L-tyrosine + diphosphate. The catalysed reaction is [protein-PII]-uridylyl-L-tyrosine + H2O = [protein-PII]-L-tyrosine + UMP + H(+). Its activity is regulated as follows. Uridylyltransferase (UTase) activity is inhibited by glutamine, while glutamine activates uridylyl-removing (UR) activity. Functionally, modifies, by uridylylation and deuridylylation, the PII regulatory proteins (GlnB and homologs), in response to the nitrogen status of the cell that GlnD senses through the glutamine level. Under low glutamine levels, catalyzes the conversion of the PII proteins and UTP to PII-UMP and PPi, while under higher glutamine levels, GlnD hydrolyzes PII-UMP to PII and UMP (deuridylylation). Thus, controls uridylylation state and activity of the PII proteins, and plays an important role in the regulation of nitrogen assimilation and metabolism. The sequence is that of Bifunctional uridylyltransferase/uridylyl-removing enzyme from Neisseria meningitidis serogroup A / serotype 4A (strain DSM 15465 / Z2491).